A 378-amino-acid chain; its full sequence is Putative F-box protein At3g24580 (378 aa).

One can recognise an F-box domain in the interval Met-1–His-47.

In Arabidopsis thaliana (Mouse-ear cress), this protein is Putative F-box protein At3g24580.